The following is a 91-amino-acid chain: Large ribosomal subunit protein bL27 (91 aa).

Positions 1 to 20 are disordered; that stretch reads MAHKKGVGSSKNGRDSNPKY.

Belongs to the bacterial ribosomal protein bL27 family.

The sequence is that of Large ribosomal subunit protein bL27 from Deinococcus geothermalis (strain DSM 11300 / CIP 105573 / AG-3a).